A 242-amino-acid chain; its full sequence is Uridylate kinase (242 aa).

Residue 16-19 participates in ATP binding; that stretch reads KVSG. Gly58 lines the UMP pocket. Residues Gly59 and Arg63 each contribute to the ATP site. Residues Asp78 and 139 to 146 each bind UMP; that span reads TGNPFCTT. ATP is bound by residues Thr166, Gln167, Tyr172, and Asp175.

It belongs to the UMP kinase family. As to quaternary structure, homohexamer.

It localises to the cytoplasm. It catalyses the reaction UMP + ATP = UDP + ADP. It participates in pyrimidine metabolism; CTP biosynthesis via de novo pathway; UDP from UMP (UMPK route): step 1/1. With respect to regulation, inhibited by UTP. Catalyzes the reversible phosphorylation of UMP to UDP. The sequence is that of Uridylate kinase from Rickettsia massiliae (strain Mtu5).